The following is an 84-amino-acid chain: Small ribosomal subunit protein eS27 (84 aa).

Residues C38–C60 form a C4-type zinc finger.

It belongs to the eukaryotic ribosomal protein eS27 family. In terms of assembly, component of the small ribosomal subunit. It depends on Zn(2+) as a cofactor.

The protein localises to the cytoplasm. In terms of biological role, component of the small ribosomal subunit. The ribosome is a large ribonucleoprotein complex responsible for the synthesis of proteins in the cell. Required for proper rRNA processing and maturation of 18S rRNAs. This is Small ribosomal subunit protein eS27 (RPS27) from Entamoeba histolytica (strain ATCC 30459 / HM-1:IMSS / ABRM).